The primary structure comprises 325 residues: Eukaryotic translation initiation factor 3 subunit I (325 aa).

WD repeat units lie at residues 8–47, 50–89, 144–183, 186–225, and 283–324; these read GHER…RLGT, GHTG…QLAL, CSES…IVNS, EHSK…HQKT, and GHFG…FEFE.

The protein belongs to the eIF-3 subunit I family. In terms of assembly, component of the eukaryotic translation initiation factor 3 (eIF-3) complex, which is composed of 13 subunits: eif3a, eif3b, eif3c, eif3d, eif3e, eif3f, eif3g, eif3h, eif3i, eif3j, eif3k, eif3l and eif3m.

Its subcellular location is the cytoplasm. Functionally, component of the eukaryotic translation initiation factor 3 (eIF-3) complex, which is involved in protein synthesis of a specialized repertoire of mRNAs and, together with other initiation factors, stimulates binding of mRNA and methionyl-tRNAi to the 40S ribosome. The eIF-3 complex specifically targets and initiates translation of a subset of mRNAs involved in cell proliferation. This Xenopus tropicalis (Western clawed frog) protein is Eukaryotic translation initiation factor 3 subunit I (eif3i).